A 334-amino-acid chain; its full sequence is Biotin synthase (334 aa).

A Radical SAM core domain is found at 55–280 (EEIEVEGIIS…HTMLRFAGGR (226 aa)). C70, C74, and C77 together coordinate [4Fe-4S] cluster. The [2Fe-2S] cluster site is built by C113, C205, and R275.

The protein belongs to the radical SAM superfamily. Biotin synthase family. Homodimer. [4Fe-4S] cluster serves as cofactor. It depends on [2Fe-2S] cluster as a cofactor.

It catalyses the reaction (4R,5S)-dethiobiotin + (sulfur carrier)-SH + 2 reduced [2Fe-2S]-[ferredoxin] + 2 S-adenosyl-L-methionine = (sulfur carrier)-H + biotin + 2 5'-deoxyadenosine + 2 L-methionine + 2 oxidized [2Fe-2S]-[ferredoxin]. It participates in cofactor biosynthesis; biotin biosynthesis; biotin from 7,8-diaminononanoate: step 2/2. Catalyzes the conversion of dethiobiotin (DTB) to biotin by the insertion of a sulfur atom into dethiobiotin via a radical-based mechanism. The protein is Biotin synthase of Corynebacterium glutamicum (strain R).